A 579-amino-acid chain; its full sequence is Probable serine/threonine-protein kinase kinY (579 aa).

The tract at residues 1 to 24 (MINGEQTMVEDELPDQGKPMSDES) is disordered. The Protein kinase domain maps to 32–309 (LKVGESIGSG…HVLKQLTSLF (278 aa)). ATP-binding positions include 38–46 (IGSGAYGIV) and Lys-59. Asp-167 serves as the catalytic Proton acceptor.

This sequence belongs to the protein kinase superfamily. TKL Ser/Thr protein kinase family.

It carries out the reaction L-seryl-[protein] + ATP = O-phospho-L-seryl-[protein] + ADP + H(+). The enzyme catalyses L-threonyl-[protein] + ATP = O-phospho-L-threonyl-[protein] + ADP + H(+). This chain is Probable serine/threonine-protein kinase kinY (kinY), found in Dictyostelium discoideum (Social amoeba).